Reading from the N-terminus, the 341-residue chain is Anthranilate phosphoribosyltransferase (341 aa).

5-phospho-alpha-D-ribose 1-diphosphate contacts are provided by residues glycine 79, 82–83 (GD), threonine 87, 89–92 (NIST), 107–115 (KHGGRSVSS), and serine 119. Residue glycine 79 coordinates anthranilate. Position 91 (serine 91) interacts with Mg(2+). Residue arginine 165 coordinates anthranilate. Positions 224 and 225 each coordinate Mg(2+).

Belongs to the anthranilate phosphoribosyltransferase family. Homodimer. Mg(2+) is required as a cofactor.

It catalyses the reaction N-(5-phospho-beta-D-ribosyl)anthranilate + diphosphate = 5-phospho-alpha-D-ribose 1-diphosphate + anthranilate. It participates in amino-acid biosynthesis; L-tryptophan biosynthesis; L-tryptophan from chorismate: step 2/5. Its function is as follows. Catalyzes the transfer of the phosphoribosyl group of 5-phosphorylribose-1-pyrophosphate (PRPP) to anthranilate to yield N-(5'-phosphoribosyl)-anthranilate (PRA). This is Anthranilate phosphoribosyltransferase from Ruminiclostridium cellulolyticum (strain ATCC 35319 / DSM 5812 / JCM 6584 / H10) (Clostridium cellulolyticum).